The chain runs to 419 residues: S-adenosylmethionine synthase (419 aa).

ATP is bound at residue His-15. Residue Asp-17 coordinates Mg(2+). Glu-43 lines the K(+) pocket. L-methionine is bound by residues Glu-56 and Gln-100. The flexible loop stretch occupies residues 100 to 110; the sequence is QSPDIAQGVNE. ATP contacts are provided by residues 171 to 173, 248 to 249, Asp-257, 263 to 264, Ala-280, and Lys-284; these read DGK, KF, and RK. Asp-257 contributes to the L-methionine binding site. Lys-288 serves as a coordination point for L-methionine.

The protein belongs to the AdoMet synthase family. In terms of assembly, homotetramer; dimer of dimers. Mg(2+) is required as a cofactor. Requires K(+) as cofactor.

Its subcellular location is the cytoplasm. It catalyses the reaction L-methionine + ATP + H2O = S-adenosyl-L-methionine + phosphate + diphosphate. It participates in amino-acid biosynthesis; S-adenosyl-L-methionine biosynthesis; S-adenosyl-L-methionine from L-methionine: step 1/1. In terms of biological role, catalyzes the formation of S-adenosylmethionine (AdoMet) from methionine and ATP. The overall synthetic reaction is composed of two sequential steps, AdoMet formation and the subsequent tripolyphosphate hydrolysis which occurs prior to release of AdoMet from the enzyme. This chain is S-adenosylmethionine synthase, found in Prochlorococcus marinus (strain MIT 9303).